The following is a 274-amino-acid chain: 4-hydroxy-3-methylbut-2-enyl diphosphate reductase (274 aa).

Residue Cys-12 participates in [4Fe-4S] cluster binding. His-36 and His-70 together coordinate (2E)-4-hydroxy-3-methylbut-2-enyl diphosphate. His-36 and His-70 together coordinate dimethylallyl diphosphate. 2 residues coordinate isopentenyl diphosphate: His-36 and His-70. Cys-92 contributes to the [4Fe-4S] cluster binding site. His-120 lines the (2E)-4-hydroxy-3-methylbut-2-enyl diphosphate pocket. His-120 provides a ligand contact to dimethylallyl diphosphate. His-120 provides a ligand contact to isopentenyl diphosphate. Glu-122 (proton donor) is an active-site residue. Thr-158 is a binding site for (2E)-4-hydroxy-3-methylbut-2-enyl diphosphate. Residue Cys-186 participates in [4Fe-4S] cluster binding. (2E)-4-hydroxy-3-methylbut-2-enyl diphosphate is bound by residues Ser-214, Ser-215, Asn-216, and Ser-258. Positions 214, 215, 216, and 258 each coordinate dimethylallyl diphosphate. Isopentenyl diphosphate-binding residues include Ser-214, Ser-215, Asn-216, and Ser-258.

Belongs to the IspH family. [4Fe-4S] cluster serves as cofactor.

It carries out the reaction isopentenyl diphosphate + 2 oxidized [2Fe-2S]-[ferredoxin] + H2O = (2E)-4-hydroxy-3-methylbut-2-enyl diphosphate + 2 reduced [2Fe-2S]-[ferredoxin] + 2 H(+). The catalysed reaction is dimethylallyl diphosphate + 2 oxidized [2Fe-2S]-[ferredoxin] + H2O = (2E)-4-hydroxy-3-methylbut-2-enyl diphosphate + 2 reduced [2Fe-2S]-[ferredoxin] + 2 H(+). It participates in isoprenoid biosynthesis; dimethylallyl diphosphate biosynthesis; dimethylallyl diphosphate from (2E)-4-hydroxy-3-methylbutenyl diphosphate: step 1/1. Its pathway is isoprenoid biosynthesis; isopentenyl diphosphate biosynthesis via DXP pathway; isopentenyl diphosphate from 1-deoxy-D-xylulose 5-phosphate: step 6/6. Functionally, catalyzes the conversion of 1-hydroxy-2-methyl-2-(E)-butenyl 4-diphosphate (HMBPP) into a mixture of isopentenyl diphosphate (IPP) and dimethylallyl diphosphate (DMAPP). Acts in the terminal step of the DOXP/MEP pathway for isoprenoid precursor biosynthesis. This is 4-hydroxy-3-methylbut-2-enyl diphosphate reductase from Helicobacter pylori (strain P12).